The chain runs to 183 residues: uncharacterized protein (183 aa).

This sequence belongs to the EUO family.

This is an uncharacterized protein from Chlamydia trachomatis serovar D (strain ATCC VR-885 / DSM 19411 / UW-3/Cx).